Here is a 190-residue protein sequence, read N- to C-terminus: Potassium-transporting ATPase KdpC subunit (190 aa).

The chain crosses the membrane as a helical span at residues 13-33; that stretch reads VGFLLLTLVCGVIYPGVVTII.

This sequence belongs to the KdpC family. The system is composed of three essential subunits: KdpA, KdpB and KdpC.

It is found in the cell membrane. In terms of biological role, part of the high-affinity ATP-driven potassium transport (or Kdp) system, which catalyzes the hydrolysis of ATP coupled with the electrogenic transport of potassium into the cytoplasm. This subunit acts as a catalytic chaperone that increases the ATP-binding affinity of the ATP-hydrolyzing subunit KdpB by the formation of a transient KdpB/KdpC/ATP ternary complex. The chain is Potassium-transporting ATPase KdpC subunit from Listeria innocua serovar 6a (strain ATCC BAA-680 / CLIP 11262).